Here is a 532-residue protein sequence, read N- to C-terminus: Transcriptional regulatory protein RtcR (532 aa).

Residues 186–424 (IATRNPHFNR…LSASVTRMAT (239 aa)) enclose the Sigma-54 factor interaction domain. ATP-binding positions include 215 to 222 (GPTGAGKS) and 281 to 290 (ANGGMLFLDE). Positions 485-504 (KSLSAAGRQLFDVSRQGKAS) form a DNA-binding region, H-T-H motif.

Transcriptional repressor of the rtcAB genes. Interacts with sigma-54. The polypeptide is Transcriptional regulatory protein RtcR (rtcR) (Escherichia coli (strain K12)).